The primary structure comprises 427 residues: Serine hydroxymethyltransferase (427 aa).

Residues leucine 122 and 126 to 128 contribute to the (6S)-5,6,7,8-tetrahydrofolate site; that span reads GHL. Lysine 231 bears the N6-(pyridoxal phosphate)lysine mark. (6S)-5,6,7,8-tetrahydrofolate contacts are provided by residues glutamate 247 and 355-357; that span reads SPF.

This sequence belongs to the SHMT family. In terms of assembly, homodimer. Requires pyridoxal 5'-phosphate as cofactor.

It localises to the cytoplasm. It carries out the reaction (6R)-5,10-methylene-5,6,7,8-tetrahydrofolate + glycine + H2O = (6S)-5,6,7,8-tetrahydrofolate + L-serine. It functions in the pathway one-carbon metabolism; tetrahydrofolate interconversion. The protein operates within amino-acid biosynthesis; glycine biosynthesis; glycine from L-serine: step 1/1. In terms of biological role, catalyzes the reversible interconversion of serine and glycine with tetrahydrofolate (THF) serving as the one-carbon carrier. This reaction serves as the major source of one-carbon groups required for the biosynthesis of purines, thymidylate, methionine, and other important biomolecules. Also exhibits THF-independent aldolase activity toward beta-hydroxyamino acids, producing glycine and aldehydes, via a retro-aldol mechanism. The protein is Serine hydroxymethyltransferase of Microcystis aeruginosa (strain NIES-843 / IAM M-2473).